The chain runs to 282 residues: Formamidopyrimidine-DNA glycosylase (282 aa).

The active-site Schiff-base intermediate with DNA is the P2. E3 (proton donor) is an active-site residue. The Proton donor; for beta-elimination activity role is filled by K60. Residues H99, R118, and R163 each coordinate DNA. The FPG-type zinc-finger motif lies at 248–282 (WVYGRTGEPCRVCGTSIERLKLGGRSAHFCPRCQA). The active-site Proton donor; for delta-elimination activity is the R272.

Belongs to the FPG family. In terms of assembly, monomer. It depends on Zn(2+) as a cofactor.

The catalysed reaction is Hydrolysis of DNA containing ring-opened 7-methylguanine residues, releasing 2,6-diamino-4-hydroxy-5-(N-methyl)formamidopyrimidine.. The enzyme catalyses 2'-deoxyribonucleotide-(2'-deoxyribose 5'-phosphate)-2'-deoxyribonucleotide-DNA = a 3'-end 2'-deoxyribonucleotide-(2,3-dehydro-2,3-deoxyribose 5'-phosphate)-DNA + a 5'-end 5'-phospho-2'-deoxyribonucleoside-DNA + H(+). Functionally, involved in base excision repair of DNA damaged by oxidation or by mutagenic agents. Acts as a DNA glycosylase that recognizes and removes damaged bases. Has a preference for oxidized purines, such as 7,8-dihydro-8-oxoguanine (8-oxoG). Has AP (apurinic/apyrimidinic) lyase activity and introduces nicks in the DNA strand. Cleaves the DNA backbone by beta-delta elimination to generate a single-strand break at the site of the removed base with both 3'- and 5'-phosphates. The sequence is that of Formamidopyrimidine-DNA glycosylase from Rippkaea orientalis (strain PCC 8801 / RF-1) (Cyanothece sp. (strain PCC 8801)).